We begin with the raw amino-acid sequence, 585 residues long: ATP-dependent RNA helicase DBP3 (585 aa).

Residues 1–124 form a disordered region; sequence MTTSATEKAL…SSSASAASFT (124 aa). Positions 26-43 are enriched in low complexity; the sequence is AKAAAAAGASASTSLEGS. Composition is skewed to basic residues over residues 52-64 and 79-93; these read KDKKDKKDKKDKK and AKKRRKEEKKAKKAA. Over residues 94-124 the composition is skewed to low complexity; sequence AKSGAATSLESTPAASPAPAASSSASAASFT. A Q motif motif is present at residues 159-187; it reads FRELDGKVDAAVKKTLDSQGFSTPTPIQA. The Helicase ATP-binding domain occupies 190–377; it reads WPVLLQNKDV…ESFMNGPVRV (188 aa). 203-210 lines the ATP pocket; sequence AETGSGKT. A DEAD box motif is present at residues 322–325; sequence DEAD. The region spanning 406–554 is the Helicase C-terminal domain; that stretch reads RLNDFLRSVN…KVPDALTKFP (149 aa).

This sequence belongs to the DEAD box helicase family. DDX5/DBP2 subfamily.

It localises to the nucleus. The protein localises to the nucleolus. It carries out the reaction ATP + H2O = ADP + phosphate + H(+). Functionally, ATP-dependent RNA helicase required for 60S ribosomal subunit synthesis. Involved in efficient pre-rRNA processing, predominantly at site A3, which is necessary for the normal formation of 25S and 5.8S rRNAs. The polypeptide is ATP-dependent RNA helicase DBP3 (DBP3) (Mycosarcoma maydis (Corn smut fungus)).